The sequence spans 651 residues: Intraflagellar transport protein 70A (651 aa).

TPR repeat units follow at residues 8–41, 42–75, 140–173, 175–207, 379–410, 411–443, and 445–478; these read DGEY…HTKS, RAAL…HPEV, PDYD…LGYQ, DLAY…GIRE, VTKQ…EKYI, PVLM…CNEH, and TWKL…HYEN. The stretch at 494 to 521 forms a coiled coil; sequence YIMTSQNEEAEELMRKIEKEEEQISYDD. The TPR 8 repeat unit spans residues 530-563; the sequence is CIVNLVIGTLYCAKGNYDFGISRVIKSLEPYNKK.

This sequence belongs to the TTC30/dfy-1/fleer family. As to expression, localizes to the cilia of many ciliated epithelial cell types including pronephric cells, olfactory placode, the brain ventricle and lateral line organs.

The protein resides in the cell projection. The protein localises to the cilium. Its function is as follows. Plays a role in anterograde intraflagellar transport (IFT), the process by which cilia precursors are transported from the base of the cilium to the site of their incorporation at the tip. Required for polyglutamylation of axonemal tubulin, which is a prerequisite for correct assembly of cilia and for normal cilia beat amplitude. Does not seem to be required for neuronal microtubule polyglutamylation. The protein is Intraflagellar transport protein 70A (ift70a) of Danio rerio (Zebrafish).